A 272-amino-acid polypeptide reads, in one-letter code: uncharacterized protein (272 aa).

Composition is skewed to basic and acidic residues over residues 136-156 (VRRE…HIDI) and 231-240 (GCKESRRNEP). Disordered stretches follow at residues 136–157 (VRRE…IDIH) and 174–272 (VKPK…WAAF). Residues 243–252 (DLSQLKKNLP) are compositionally biased toward polar residues. Residues 253-272 (STAGSGSSKSTGAASGWAAF) show a composition bias toward low complexity.

This is an uncharacterized protein from Arabidopsis thaliana (Mouse-ear cress).